The sequence spans 291 residues: Acetylglutamate kinase (291 aa).

Residues 64-65 (GG), Arg-86, and Asn-190 contribute to the substrate site.

This sequence belongs to the acetylglutamate kinase family. ArgB subfamily.

It localises to the cytoplasm. The enzyme catalyses N-acetyl-L-glutamate + ATP = N-acetyl-L-glutamyl 5-phosphate + ADP. It functions in the pathway amino-acid biosynthesis; L-arginine biosynthesis; N(2)-acetyl-L-ornithine from L-glutamate: step 2/4. Functionally, catalyzes the ATP-dependent phosphorylation of N-acetyl-L-glutamate. In Leptospira borgpetersenii serovar Hardjo-bovis (strain L550), this protein is Acetylglutamate kinase.